The primary structure comprises 99 residues: Large ribosomal subunit protein uL23 (99 aa).

It belongs to the universal ribosomal protein uL23 family. Part of the 50S ribosomal subunit. Contacts protein L29, and trigger factor when it is bound to the ribosome.

Functionally, one of the early assembly proteins it binds 23S rRNA. One of the proteins that surrounds the polypeptide exit tunnel on the outside of the ribosome. Forms the main docking site for trigger factor binding to the ribosome. The polypeptide is Large ribosomal subunit protein uL23 (Lachnospira eligens (strain ATCC 27750 / DSM 3376 / VPI C15-48 / C15-B4) (Eubacterium eligens)).